The chain runs to 121 residues: uncharacterized protein (121 aa).

Residues 9–29 (LTILIASIYIIFFVNAAPTLY) traverse the membrane as a helical segment. The disordered stretch occupies residues 91–121 (EELPTYPPTMTTPLETTPLDTSPPVLPSAIP). A compositionally biased stretch (low complexity) spans 98–113 (PTMTTPLETTPLDTSP).

The protein resides in the host membrane. This is an uncharacterized protein from Alcelaphine herpesvirus 1 (strain C500) (AlHV-1).